Here is a 285-residue protein sequence, read N- to C-terminus: V-set and transmembrane domain-containing protein 2B (285 aa).

The signal sequence occupies residues 1 to 28 (MEQRNRLGALGYLLPLLLHSLLLFVADA). In terms of domain architecture, Ig-like V-type spans 29-143 (TFTEVPKDVT…DDDTQEHKAQ (115 aa)). At 29–263 (TFTEVPKDVT…HGSGTGPGYS (235 aa)) the chain is on the extracellular side. Cysteine 49 and cysteine 127 form a disulfide bridge. The tract at residues 160–225 (AEAVSHIQSS…AAAAAASATH (66 aa)) is disordered. Composition is skewed to low complexity over residues 176–189 (ASSA…GAAV) and 208–225 (PAGS…SATH). Residues 264-284 (ADPLLSLLLLALHKFLHPLLG) form a helical membrane-spanning segment. Histidine 285 is a topological domain (cytoplasmic).

The protein localises to the membrane. This chain is V-set and transmembrane domain-containing protein 2B (Vstm2b), found in Mus musculus (Mouse).